A 268-amino-acid polypeptide reads, in one-letter code: Tryptophan synthase alpha chain (268 aa).

Catalysis depends on proton acceptor residues Glu-49 and Asp-60.

Belongs to the TrpA family. In terms of assembly, tetramer of two alpha and two beta chains.

It carries out the reaction (1S,2R)-1-C-(indol-3-yl)glycerol 3-phosphate + L-serine = D-glyceraldehyde 3-phosphate + L-tryptophan + H2O. It participates in amino-acid biosynthesis; L-tryptophan biosynthesis; L-tryptophan from chorismate: step 5/5. Functionally, the alpha subunit is responsible for the aldol cleavage of indoleglycerol phosphate to indole and glyceraldehyde 3-phosphate. This is Tryptophan synthase alpha chain from Xylella fastidiosa (strain 9a5c).